A 171-amino-acid chain; its full sequence is Large ribosomal subunit protein uL10 (171 aa).

It belongs to the universal ribosomal protein uL10 family. As to quaternary structure, part of the ribosomal stalk of the 50S ribosomal subunit. The N-terminus interacts with L11 and the large rRNA to form the base of the stalk. The C-terminus forms an elongated spine to which L12 dimers bind in a sequential fashion forming a multimeric L10(L12)X complex.

Functionally, forms part of the ribosomal stalk, playing a central role in the interaction of the ribosome with GTP-bound translation factors. The protein is Large ribosomal subunit protein uL10 of Zymomonas mobilis subsp. mobilis (strain ATCC 31821 / ZM4 / CP4).